Consider the following 218-residue polypeptide: Ribonuclease T (218 aa).

The 175-residue stretch at 20-194 (VVIDVETAGF…YDAERTAELF (175 aa)) folds into the Exonuclease domain. Positions 23, 25, 181, and 186 each coordinate Mg(2+). His181 serves as the catalytic Proton donor/acceptor.

The protein belongs to the RNase T family. Homodimer. The cofactor is Mg(2+).

Its function is as follows. Trims short 3' overhangs of a variety of RNA species, leaving a one or two nucleotide 3' overhang. Responsible for the end-turnover of tRNA: specifically removes the terminal AMP residue from uncharged tRNA (tRNA-C-C-A). Also appears to be involved in tRNA biosynthesis. This is Ribonuclease T from Baumannia cicadellinicola subsp. Homalodisca coagulata.